A 370-amino-acid chain; its full sequence is A-type ATP synthase subunit C (370 aa).

Belongs to the V-ATPase V0D/AC39 subunit family. Has multiple subunits with at least A(3), B(3), C, D, E, F, H, I and proteolipid K(x).

The protein localises to the cell membrane. In terms of biological role, component of the A-type ATP synthase that produces ATP from ADP in the presence of a proton gradient across the membrane. This is A-type ATP synthase subunit C from Pyrococcus horikoshii (strain ATCC 700860 / DSM 12428 / JCM 9974 / NBRC 100139 / OT-3).